The following is a 350-amino-acid chain: 4-hydroxy-3-methylbut-2-enyl diphosphate reductase (350 aa).

Cys-36 is a binding site for [4Fe-4S] cluster. His-65 and His-101 together coordinate (2E)-4-hydroxy-3-methylbut-2-enyl diphosphate. Dimethylallyl diphosphate is bound by residues His-65 and His-101. The isopentenyl diphosphate site is built by His-65 and His-101. Cys-123 is a binding site for [4Fe-4S] cluster. His-151 is a binding site for (2E)-4-hydroxy-3-methylbut-2-enyl diphosphate. His-151 contributes to the dimethylallyl diphosphate binding site. Isopentenyl diphosphate is bound at residue His-151. Glu-153 (proton donor) is an active-site residue. Thr-192 lines the (2E)-4-hydroxy-3-methylbut-2-enyl diphosphate pocket. Position 222 (Cys-222) interacts with [4Fe-4S] cluster. (2E)-4-hydroxy-3-methylbut-2-enyl diphosphate-binding residues include Ser-250, Ser-251, Asn-252, and Ser-295. 4 residues coordinate dimethylallyl diphosphate: Ser-250, Ser-251, Asn-252, and Ser-295. Ser-250, Ser-251, Asn-252, and Ser-295 together coordinate isopentenyl diphosphate.

The protein belongs to the IspH family. [4Fe-4S] cluster serves as cofactor.

The enzyme catalyses isopentenyl diphosphate + 2 oxidized [2Fe-2S]-[ferredoxin] + H2O = (2E)-4-hydroxy-3-methylbut-2-enyl diphosphate + 2 reduced [2Fe-2S]-[ferredoxin] + 2 H(+). The catalysed reaction is dimethylallyl diphosphate + 2 oxidized [2Fe-2S]-[ferredoxin] + H2O = (2E)-4-hydroxy-3-methylbut-2-enyl diphosphate + 2 reduced [2Fe-2S]-[ferredoxin] + 2 H(+). Its pathway is isoprenoid biosynthesis; dimethylallyl diphosphate biosynthesis; dimethylallyl diphosphate from (2E)-4-hydroxy-3-methylbutenyl diphosphate: step 1/1. It functions in the pathway isoprenoid biosynthesis; isopentenyl diphosphate biosynthesis via DXP pathway; isopentenyl diphosphate from 1-deoxy-D-xylulose 5-phosphate: step 6/6. Functionally, catalyzes the conversion of 1-hydroxy-2-methyl-2-(E)-butenyl 4-diphosphate (HMBPP) into a mixture of isopentenyl diphosphate (IPP) and dimethylallyl diphosphate (DMAPP). Acts in the terminal step of the DOXP/MEP pathway for isoprenoid precursor biosynthesis. The polypeptide is 4-hydroxy-3-methylbut-2-enyl diphosphate reductase (Rhizobium meliloti (strain 1021) (Ensifer meliloti)).